A 254-amino-acid polypeptide reads, in one-letter code: MRIDLNSDLGESYGSWIMGNDEQILPMVSSANIACGFHAGDPLGIFKTLKQAAKLGVTVGAHVSYPDLAGFGRRNMQLSYDELLTDVMYQISALQGLAKAAGTTVKYVKPHGALYNTIATDLQQAQAVLDAIKCLDSDLILVGLAGSPLITFAQQNGLNVVAEAFADRAYNADGSLVSRRLAGAVLHDPDFVAKRVVKMIQEGGVISIDGHFTPISAQSICLHGDTDGALSMAAAIRNALLTEGIEIRSFCEVN.

This sequence belongs to the LamB/PxpA family. In terms of assembly, forms a complex composed of PxpA, PxpB and PxpC.

The catalysed reaction is 5-oxo-L-proline + ATP + 2 H2O = L-glutamate + ADP + phosphate + H(+). Catalyzes the cleavage of 5-oxoproline to form L-glutamate coupled to the hydrolysis of ATP to ADP and inorganic phosphate. The polypeptide is 5-oxoprolinase subunit A (Acinetobacter baylyi (strain ATCC 33305 / BD413 / ADP1)).